We begin with the raw amino-acid sequence, 251 residues long: Xylose/arabinose import ATP-binding protein XylG (251 aa).

In terms of domain architecture, ABC transporter spans 5-241 (LEIRDVHKSF…EITEVMTSFA (237 aa)). 37–44 (GDNGAGKS) provides a ligand contact to ATP.

This sequence belongs to the ABC transporter superfamily. In terms of assembly, the complex is composed of two ATP-binding proteins (XylG), two transmembrane proteins (XylH) and a solute-binding protein (XylF).

It localises to the cell membrane. The catalysed reaction is D-xylose(out) + ATP + H2O = D-xylose(in) + ADP + phosphate + H(+). It carries out the reaction L-arabinose(out) + ATP + H2O = L-arabinose(in) + ADP + phosphate + H(+). Functionally, part of the ABC transporter complex XylFGH involved in the uptake of xylose and arabinose. Responsible for energy coupling to the transport system. The chain is Xylose/arabinose import ATP-binding protein XylG from Sulfolobus acidocaldarius (strain ATCC 33909 / DSM 639 / JCM 8929 / NBRC 15157 / NCIMB 11770).